The primary structure comprises 254 residues: Triosephosphate isomerase (254 aa).

Substrate is bound at residue 9–11 (NWK). The Electrophile role is filled by His95. Catalysis depends on Glu167, which acts as the Proton acceptor. Residues Gly173, Ser213, and 234-235 (GG) contribute to the substrate site.

This sequence belongs to the triosephosphate isomerase family. Homodimer.

Its subcellular location is the cytoplasm. It catalyses the reaction D-glyceraldehyde 3-phosphate = dihydroxyacetone phosphate. Its pathway is carbohydrate biosynthesis; gluconeogenesis. It participates in carbohydrate degradation; glycolysis; D-glyceraldehyde 3-phosphate from glycerone phosphate: step 1/1. Functionally, involved in the gluconeogenesis. Catalyzes stereospecifically the conversion of dihydroxyacetone phosphate (DHAP) to D-glyceraldehyde-3-phosphate (G3P). This Roseiflexus sp. (strain RS-1) protein is Triosephosphate isomerase.